We begin with the raw amino-acid sequence, 341 residues long: Methionine import ATP-binding protein MetN 1 (341 aa).

Positions 2–241 (IEFRQVSKSF…PKTTIAQNFV (240 aa)) constitute an ABC transporter domain. ATP is bound at residue 38–45 (GYSGAGKS).

Belongs to the ABC transporter superfamily. Methionine importer (TC 3.A.1.24) family. The complex is composed of two ATP-binding proteins (MetN), two transmembrane proteins (MetI) and a solute-binding protein (MetQ).

It is found in the cell membrane. The enzyme catalyses L-methionine(out) + ATP + H2O = L-methionine(in) + ADP + phosphate + H(+). The catalysed reaction is D-methionine(out) + ATP + H2O = D-methionine(in) + ADP + phosphate + H(+). Its function is as follows. Part of the ABC transporter complex MetNIQ involved in methionine import. Responsible for energy coupling to the transport system. The chain is Methionine import ATP-binding protein MetN 1 from Staphylococcus aureus (strain Mu50 / ATCC 700699).